The following is a 211-amino-acid chain: Pyruvate dehydrogenase E1 component subunit beta, mitochondrial (211 aa).

Tyr-31 carries the post-translational modification Phosphotyrosine. K(+)-binding residues include Ile-48, Ala-96, Ile-97, Asp-99, and Asn-101.

As to quaternary structure, heterotetramer of two PDHA1 and two PDHB subunits. The heterotetramer interacts with DLAT, and is part of the multimeric pyruvate dehydrogenase complex that contains multiple copies of pyruvate dehydrogenase (E1), dihydrolipoamide acetyltransferase (DLAT, E2) and lipoamide dehydrogenase (DLD, E3). These subunits are bound to an inner core composed of about 48 DLAT and 12 PDHX molecules. Interacts with DLAT. It depends on thiamine diphosphate as a cofactor.

It localises to the mitochondrion matrix. The enzyme catalyses N(6)-[(R)-lipoyl]-L-lysyl-[protein] + pyruvate + H(+) = N(6)-[(R)-S(8)-acetyldihydrolipoyl]-L-lysyl-[protein] + CO2. Its function is as follows. The pyruvate dehydrogenase complex catalyzes the overall conversion of pyruvate to acetyl-CoA and CO(2), and thereby links the glycolytic pathway to the tricarboxylic cycle. The polypeptide is Pyruvate dehydrogenase E1 component subunit beta, mitochondrial (Mesocricetus auratus (Golden hamster)).